A 278-amino-acid polypeptide reads, in one-letter code: Elongation factor Ts (278 aa).

Positions 82–85 (TDFV) are involved in Mg(2+) ion dislocation from EF-Tu.

It belongs to the EF-Ts family.

It is found in the cytoplasm. Its function is as follows. Associates with the EF-Tu.GDP complex and induces the exchange of GDP to GTP. It remains bound to the aminoacyl-tRNA.EF-Tu.GTP complex up to the GTP hydrolysis stage on the ribosome. This chain is Elongation factor Ts (tsf), found in Streptomyces ramocissimus.